We begin with the raw amino-acid sequence, 558 residues long: Formate--tetrahydrofolate ligase (558 aa).

Residue 66 to 73 (TPAGEGKT) coordinates ATP.

The protein belongs to the formate--tetrahydrofolate ligase family.

The catalysed reaction is (6S)-5,6,7,8-tetrahydrofolate + formate + ATP = (6R)-10-formyltetrahydrofolate + ADP + phosphate. Its pathway is one-carbon metabolism; tetrahydrofolate interconversion. This chain is Formate--tetrahydrofolate ligase, found in Neisseria gonorrhoeae (strain ATCC 700825 / FA 1090).